Consider the following 445-residue polypeptide: tRNA modification GTPase MnmE (445 aa).

(6S)-5-formyl-5,6,7,8-tetrahydrofolate is bound by residues arginine 20, glutamate 79, and lysine 119. Residues 215 to 371 (GLKLAIIGPP…ILKNIENIAE (157 aa)) enclose the TrmE-type G domain. Asparagine 225 is a binding site for K(+). Residues 225–230 (NVGKSS), 244–250 (SNIAGTT), and 269–272 (DTAG) each bind GTP. Serine 229 serves as a coordination point for Mg(2+). Residues serine 244, isoleucine 246, and threonine 249 each contribute to the K(+) site. Residue threonine 250 coordinates Mg(2+). Lysine 445 serves as a coordination point for (6S)-5-formyl-5,6,7,8-tetrahydrofolate.

The protein belongs to the TRAFAC class TrmE-Era-EngA-EngB-Septin-like GTPase superfamily. TrmE GTPase family. In terms of assembly, homodimer. Heterotetramer of two MnmE and two MnmG subunits. The cofactor is K(+).

It is found in the cytoplasm. Its function is as follows. Exhibits a very high intrinsic GTPase hydrolysis rate. Involved in the addition of a carboxymethylaminomethyl (cmnm) group at the wobble position (U34) of certain tRNAs, forming tRNA-cmnm(5)s(2)U34. In Rickettsia conorii (strain ATCC VR-613 / Malish 7), this protein is tRNA modification GTPase MnmE.